Consider the following 722-residue polypeptide: D-(-)-3-hydroxybutyrate oligomer hydrolase (722 aa).

Over residues methionine 1–histidine 11 the composition is skewed to polar residues. The segment at methionine 1–alanine 20 is disordered. The signal sequence occupies residues methionine 1–alanine 36. The Charge relay system role is filled by serine 327. The interval proline 671–asparagine 697 is disordered.

It belongs to the D-(-)-3-hydroxybutyrate oligomer hydrolase family.

The protein resides in the secreted. It catalyses the reaction (3R)-hydroxybutanoate dimer + H2O = 2 (R)-3-hydroxybutanoate + H(+). Its pathway is lipid metabolism; butanoate metabolism. In terms of biological role, participates in the degradation of poly-3-hydroxybutyrate (PHB). It works downstream of poly(3-hydroxybutyrate) depolymerase, hydrolyzing D(-)-3-hydroxybutyrate oligomers of various length (3HB-oligomers) into 3HB-monomers. This chain is D-(-)-3-hydroxybutyrate oligomer hydrolase, found in Cupriavidus metallidurans (strain ATCC 43123 / DSM 2839 / NBRC 102507 / CH34) (Ralstonia metallidurans).